Reading from the N-terminus, the 329-residue chain is Capsular polysaccharide phosphotransferase WcwK (329 aa).

Belongs to the stealth family.

The polypeptide is Capsular polysaccharide phosphotransferase WcwK (wcwK) (Streptococcus pneumoniae).